Here is a 273-residue protein sequence, read N- to C-terminus: Ethanolamine ammonia-lyase small subunit (273 aa).

The adenosylcob(III)alamin site is built by V164, E185, and C214.

This sequence belongs to the EutC family. As to quaternary structure, the basic unit is a heterodimer which dimerizes to form tetramers. The heterotetramers trimerize; 6 large subunits form a core ring with 6 small subunits projecting outwards. Adenosylcob(III)alamin serves as cofactor.

The protein localises to the bacterial microcompartment. It catalyses the reaction ethanolamine = acetaldehyde + NH4(+). It participates in amine and polyamine degradation; ethanolamine degradation. In terms of biological role, catalyzes the deamination of various vicinal amino-alcohols to oxo compounds. Allows this organism to utilize ethanolamine as the sole source of nitrogen and carbon in the presence of external vitamin B12. The protein is Ethanolamine ammonia-lyase small subunit of Pseudomonas paraeruginosa (strain DSM 24068 / PA7) (Pseudomonas aeruginosa (strain PA7)).